We begin with the raw amino-acid sequence, 209 residues long: Uracil phosphoribosyltransferase (209 aa).

Residues Arg79, Arg104, and 131–139 (DPMLATGHT) contribute to the 5-phospho-alpha-D-ribose 1-diphosphate site. Uracil is bound by residues Ile194 and 199–201 (GDA). Asp200 serves as a coordination point for 5-phospho-alpha-D-ribose 1-diphosphate.

Belongs to the UPRTase family. The cofactor is Mg(2+).

The enzyme catalyses UMP + diphosphate = 5-phospho-alpha-D-ribose 1-diphosphate + uracil. It participates in pyrimidine metabolism; UMP biosynthesis via salvage pathway; UMP from uracil: step 1/1. With respect to regulation, allosterically activated by GTP. Its function is as follows. Catalyzes the conversion of uracil and 5-phospho-alpha-D-ribose 1-diphosphate (PRPP) to UMP and diphosphate. The chain is Uracil phosphoribosyltransferase from Caulobacter sp. (strain K31).